We begin with the raw amino-acid sequence, 188 residues long: Ribosome-recycling factor (188 aa).

The protein belongs to the RRF family.

It localises to the cytoplasm. Functionally, responsible for the release of ribosomes from messenger RNA at the termination of protein biosynthesis. May increase the efficiency of translation by recycling ribosomes from one round of translation to another. The protein is Ribosome-recycling factor of Gluconacetobacter diazotrophicus (strain ATCC 49037 / DSM 5601 / CCUG 37298 / CIP 103539 / LMG 7603 / PAl5).